A 189-amino-acid chain; its full sequence is Ribonuclease M5 2 (189 aa).

Residues 8–91 form the Toprim domain; sequence SQVIVAEGRD…VFLKRDEAVP (84 aa). Residues Glu-14, Asp-60, and Asp-62 each coordinate Mg(2+).

The protein belongs to the ribonuclease M5 family. Mg(2+) is required as a cofactor.

The protein localises to the cytoplasm. It catalyses the reaction Endonucleolytic cleavage of RNA, removing 21 and 42 nucleotides, respectively, from the 5'- and 3'-termini of a 5S-rRNA precursor.. Its function is as follows. Required for correct processing of both the 5' and 3' ends of 5S rRNA precursor. Cleaves both sides of a double-stranded region yielding mature 5S rRNA in one step. The protein is Ribonuclease M5 2 of Ligilactobacillus salivarius (strain UCC118) (Lactobacillus salivarius).